Consider the following 530-residue polypeptide: Probable cytochrome P450 519A1 (530 aa).

A helical transmembrane segment spans residues 1-21 (MESIINLIFYIIIFLILIDFL). Cysteine 476 is a binding site for heme.

The protein belongs to the cytochrome P450 family. It depends on heme as a cofactor.

Its subcellular location is the membrane. The polypeptide is Probable cytochrome P450 519A1 (cyp519A1) (Dictyostelium discoideum (Social amoeba)).